Consider the following 69-residue polypeptide: Large ribosomal subunit protein uL29 (69 aa).

Belongs to the universal ribosomal protein uL29 family.

The chain is Large ribosomal subunit protein uL29 from Mycoplasmopsis agalactiae (strain NCTC 10123 / CIP 59.7 / PG2) (Mycoplasma agalactiae).